The primary structure comprises 170 residues: Ribosomal RNA small subunit methyltransferase G (170 aa).

S-adenosyl-L-methionine-binding positions include G70, L75, 120 to 121, and R138; that span reads AE.

This sequence belongs to the methyltransferase superfamily. RNA methyltransferase RsmG family.

Its subcellular location is the cytoplasm. Specifically methylates the N7 position of guanine in position 518 of 16S rRNA. The polypeptide is Ribosomal RNA small subunit methyltransferase G (Mycobacterium ulcerans (strain Agy99)).